Reading from the N-terminus, the 450-residue chain is Tubulin alpha chain (450 aa).

Position 11 (Q11) interacts with GTP. Position 40 is an N6-acetyllysine (K40). 7 residues coordinate GTP: E71, S140, G144, T145, T179, N206, and N228. E71 is a Mg(2+) binding site. The active site involves E254.

Belongs to the tubulin family. In terms of assembly, dimer of alpha and beta chains. A typical microtubule is a hollow water-filled tube with an outer diameter of 25 nm and an inner diameter of 15 nM. Alpha-beta heterodimers associate head-to-tail to form protofilaments running lengthwise along the microtubule wall with the beta-tubulin subunit facing the microtubule plus end conferring a structural polarity. Microtubules usually have 13 protofilaments but different protofilament numbers can be found in some organisms and specialized cells. The cofactor is Mg(2+). Post-translationally, acetylation of alpha chains at Lys-40 stabilizes microtubules and affects affinity and processivity of microtubule motors. This modification has a role in multiple cellular functions, ranging from cell motility, cell cycle progression or cell differentiation to intracellular trafficking and signaling.

The protein localises to the cytoplasm. Its subcellular location is the cytoskeleton. It catalyses the reaction GTP + H2O = GDP + phosphate + H(+). Tubulin is the major constituent of microtubules, a cylinder consisting of laterally associated linear protofilaments composed of alpha- and beta-tubulin heterodimers. Microtubules grow by the addition of GTP-tubulin dimers to the microtubule end, where a stabilizing cap forms. Below the cap, tubulin dimers are in GDP-bound state, owing to GTPase activity of alpha-tubulin. The chain is Tubulin alpha chain from Oxytricha granulifera (Ciliate).